Consider the following 302-residue polypeptide: Glutamate/aspartate import solute-binding protein (302 aa).

Residues 1–22 (MQLRKLTTAMLVMGLSAGLAHA) form the signal peptide.

It belongs to the bacterial solute-binding protein 3 family. In terms of assembly, the complex is composed of two ATP-binding proteins (GltL), two transmembrane proteins (GltJ and GltK) and a solute-binding protein (GltI).

The protein localises to the periplasm. Part of the ABC transporter complex GltIJKL involved in glutamate and aspartate uptake. Binds to both glutamate and aspartate. This Salmonella typhimurium (strain LT2 / SGSC1412 / ATCC 700720) protein is Glutamate/aspartate import solute-binding protein (gltI).